Here is a 275-residue protein sequence, read N- to C-terminus: Hydroxyethylthiazole kinase (275 aa).

Met50 contacts substrate. Positions 126 and 171 each coordinate ATP. Ala200 is a binding site for substrate.

It belongs to the Thz kinase family. The cofactor is Mg(2+).

It carries out the reaction 5-(2-hydroxyethyl)-4-methylthiazole + ATP = 4-methyl-5-(2-phosphooxyethyl)-thiazole + ADP + H(+). The protein operates within cofactor biosynthesis; thiamine diphosphate biosynthesis; 4-methyl-5-(2-phosphoethyl)-thiazole from 5-(2-hydroxyethyl)-4-methylthiazole: step 1/1. Its function is as follows. Catalyzes the phosphorylation of the hydroxyl group of 4-methyl-5-beta-hydroxyethylthiazole (THZ). The polypeptide is Hydroxyethylthiazole kinase (Acinetobacter baumannii (strain AB307-0294)).